The chain runs to 202 residues: Imidazoleglycerol-phosphate dehydratase (202 aa).

It belongs to the imidazoleglycerol-phosphate dehydratase family.

Its subcellular location is the cytoplasm. The catalysed reaction is D-erythro-1-(imidazol-4-yl)glycerol 3-phosphate = 3-(imidazol-4-yl)-2-oxopropyl phosphate + H2O. It participates in amino-acid biosynthesis; L-histidine biosynthesis; L-histidine from 5-phospho-alpha-D-ribose 1-diphosphate: step 6/9. The protein is Imidazoleglycerol-phosphate dehydratase of Rhizobium johnstonii (strain DSM 114642 / LMG 32736 / 3841) (Rhizobium leguminosarum bv. viciae).